The chain runs to 485 residues: Palmitoyltransferase ZDHHC1 (485 aa).

Residues 1–41 (MYKMNICNKPSNKTAPEKSVWTAPAQPSGPSPELQGQRSRR) form a disordered region. At 1–52 (MYKMNICNKPSNKTAPEKSVWTAPAQPSGPSPELQGQRSRRNGWSWPPHPLQ) the chain is on the cytoplasmic side. Positions 1 to 271 (MYKMNICNKP…GHLLCFHIYL (271 aa)) are mediates interaction with STING1. The chain crosses the membrane as a helical span at residues 53–73 (IVAWLLYLFFAVIGFGILVPL). The Lumenal segment spans residues 74 to 77 (LPHH). The chain crosses the membrane as a helical span at residues 78 to 98 (WVPAGYACMGAIFAGHLVVHL). Residues 99–185 (TAVSIDPADA…YRLFLHSVAS (87 aa)) are Cytoplasmic-facing. In terms of domain architecture, DHHC spans 134–184 (LHCNLCNVDVSARSKHCSACNKCVCGFDHHCKWLNNCVGERNYRLFLHSVA). Cys164 (S-palmitoyl cysteine intermediate) is an active-site residue. Residues 186–206 (ALLGVLLLVLVATYVFVEFFV) traverse the membrane as a helical segment. At 207–241 (NPMRLRTNRHFEVLKNHTDVWFVFLPAAPVETQAP) the chain is on the lumenal side. A helical membrane pass occupies residues 242–262 (AILALAALLILLGLLSTALLG). The Cytoplasmic portion of the chain corresponds to 263-485 (HLLCFHIYLM…RGRRVRPPFS (223 aa)). 2 disordered regions span residues 324-358 (EPPG…GPPV) and 462-485 (LWPP…PPFS). Residues 475 to 485 (WRGRRVRPPFS) show a composition bias toward basic residues.

This sequence belongs to the DHHC palmitoyltransferase family. As to quaternary structure, interacts with STING1; ZDHHC1 constitutively interacts with STING1 and in presence of DNA viruses activates it by promoting its cGAMP-induced oligomerization and the recruitment of downstream signaling components. Widely expressed with significant expression in heart, brain, placenta, lung, liver, kidney, testis, thymus and small intestine. Expressed at lower levels in adult pancreas and lung.

Its subcellular location is the endosome membrane. It is found in the endoplasmic reticulum membrane. The protein resides in the golgi apparatus. It carries out the reaction L-cysteinyl-[protein] + hexadecanoyl-CoA = S-hexadecanoyl-L-cysteinyl-[protein] + CoA. Palmitoyltransferase that catalyzes the addition of palmitate onto various protein substrates, such as NCDN and NLRP3. Has a palmitoyltransferase activity toward NCDN and regulates NCDN association with endosome membranes through this palmitoylation. Acts as an activator of the NLRP3 inflammasome by mediating palmitoylation of 'Cys-130' and 'Cys-958' of NLRP3, thereby promoting NLRP3 phosphorylation and activation by NEK7. Its function is as follows. Also has a palmitoyltransferase activity-independent function in DNA virus-triggered and CGAS-mediated innate immune response. Functions as an activator of STING1 by promoting its cGAMP-induced oligomerization and the recruitment of downstream signaling components. In Homo sapiens (Human), this protein is Palmitoyltransferase ZDHHC1.